An 87-amino-acid chain; its full sequence is Large ribosomal subunit protein bL27 (87 aa).

The disordered stretch occupies residues 1–24 (MAHKKGTGSTRNGRDSRSQRLGVK).

The protein belongs to the bacterial ribosomal protein bL27 family.

This chain is Large ribosomal subunit protein bL27, found in Crocosphaera subtropica (strain ATCC 51142 / BH68) (Cyanothece sp. (strain ATCC 51142)).